Reading from the N-terminus, the 473-residue chain is Cysteine--tRNA ligase (473 aa).

C29 serves as a coordination point for Zn(2+). Positions 31-41 (ATVQSAPHIGH) match the 'HIGH' region motif. C207, H232, and E236 together coordinate Zn(2+). The short motif at 263-267 (KMSKS) is the 'KMSKS' region element. K266 is an ATP binding site.

It belongs to the class-I aminoacyl-tRNA synthetase family. Monomer. It depends on Zn(2+) as a cofactor.

The protein localises to the cytoplasm. The enzyme catalyses tRNA(Cys) + L-cysteine + ATP = L-cysteinyl-tRNA(Cys) + AMP + diphosphate. This is Cysteine--tRNA ligase from Corynebacterium kroppenstedtii (strain DSM 44385 / JCM 11950 / CIP 105744 / CCUG 35717).